The chain runs to 144 residues: Putative sugar phosphate isomerase RBE_0278 (144 aa).

Residue His-12 coordinates substrate. The active-site Proton donor is His-101. Arg-135 is a substrate binding site.

The protein belongs to the LacAB/RpiB family.

The protein is Putative sugar phosphate isomerase RBE_0278 of Rickettsia bellii (strain RML369-C).